We begin with the raw amino-acid sequence, 159 residues long: MEKLTEKDKELIRGSWESLGKNKVPHGVVMFSRLFELEPALLNLFHYNTNCSPTQDCLSSPEFLDHVTKVMLVIDAAVSHLDDLHTLEDFLLNLGKKHQAVGVNTQSFAVVGESLLYMLQCSLGHGYTGPLRQAWLNMYTIVVAAMSRGWAKNGEHKTD.

In terms of domain architecture, Globin spans 3–151 (KLTEKDKELI…VVAAMSRGWA (149 aa)). The heme b site is built by His66 and His98.

Belongs to the globin family. Monomer. Homodimers and homotetramers. Mainly monomeric but also detected as part of homodimers and homotetramers.

Its subcellular location is the cytoplasm. It is found in the cytosol. The protein localises to the mitochondrion matrix. The enzyme catalyses Fe(III)-heme b-[protein] + nitric oxide + H2O = Fe(II)-heme b-[protein] + nitrite + 2 H(+). Functionally, monomeric globin with a bis-histidyl six-coordinate heme-iron atom through which it can bind dioxygen, carbon monoxide and nitric oxide. Could help transport oxygen and increase its availability to the metabolically active neuronal tissues, though its low quantity in tissues as well as its high affinity for dioxygen, which may limit its oxygen-releasing ability, argue against it. The ferrous/deoxygenated form exhibits a nitrite reductase activity and it could produce nitric oxide which in turn inhibits cellular respiration in response to hypoxia. In its ferrous/deoxygenated state, it may also exhibit GDI (Guanine nucleotide Dissociation Inhibitor) activity toward heterotrimeric G-alpha proteins, thereby regulating signal transduction to facilitate neuroprotective responses in the wake of hypoxia and associated oxidative stress. This chain is Neuroglobin-2 (ngb2), found in Oncorhynchus mykiss (Rainbow trout).